We begin with the raw amino-acid sequence, 129 residues long: Small ribosomal subunit protein uS11 (129 aa).

Belongs to the universal ribosomal protein uS11 family. Part of the 30S ribosomal subunit. Interacts with proteins S7 and S18. Binds to IF-3.

In terms of biological role, located on the platform of the 30S subunit, it bridges several disparate RNA helices of the 16S rRNA. Forms part of the Shine-Dalgarno cleft in the 70S ribosome. The chain is Small ribosomal subunit protein uS11 from Rhodopseudomonas palustris (strain BisB5).